A 227-amino-acid chain; its full sequence is Peptidyl-tRNA hydrolase (227 aa).

Tyr14 contacts tRNA. His19 (proton acceptor) is an active-site residue. Positions 64, 66, and 112 each coordinate tRNA. The segment at 182–227 (RIALLTQPPKPPKPPKPPKDGAKETAGKGTEAETAKPPGPAAGRTG) is disordered. Basic and acidic residues predominate over residues 198–215 (PPKDGAKETAGKGTEAET).

The protein belongs to the PTH family. As to quaternary structure, monomer.

Its subcellular location is the cytoplasm. The enzyme catalyses an N-acyl-L-alpha-aminoacyl-tRNA + H2O = an N-acyl-L-amino acid + a tRNA + H(+). Its function is as follows. Hydrolyzes ribosome-free peptidyl-tRNAs (with 1 or more amino acids incorporated), which drop off the ribosome during protein synthesis, or as a result of ribosome stalling. Functionally, catalyzes the release of premature peptidyl moieties from peptidyl-tRNA molecules trapped in stalled 50S ribosomal subunits, and thus maintains levels of free tRNAs and 50S ribosomes. This chain is Peptidyl-tRNA hydrolase, found in Rhodospirillum centenum (strain ATCC 51521 / SW).